The primary structure comprises 290 residues: Glycine--tRNA ligase alpha subunit (290 aa).

The protein belongs to the class-II aminoacyl-tRNA synthetase family. As to quaternary structure, tetramer of two alpha and two beta subunits.

It is found in the cytoplasm. It carries out the reaction tRNA(Gly) + glycine + ATP = glycyl-tRNA(Gly) + AMP + diphosphate. This Syntrophobacter fumaroxidans (strain DSM 10017 / MPOB) protein is Glycine--tRNA ligase alpha subunit.